Consider the following 148-residue polypeptide: Large ribosomal subunit protein bL9 (148 aa).

Belongs to the bacterial ribosomal protein bL9 family.

Its function is as follows. Binds to the 23S rRNA. The protein is Large ribosomal subunit protein bL9 of Pseudomonas fluorescens (strain SBW25).